The sequence spans 352 residues: MDDNKQKALAAALGQIEKQFGKGSIMRLGDNKTMDIETVSTGSLALDIALGAGGLPMGRIVEIYGPESSGKTTLTLEVIASAQKAGKTCAFIDAEHALDPIYAQKLGVDIDQLLCSQPDTGEQALEIVDALARSGAVDLIVVDSVAALTPKAEIEGEMGDSHMGLQARMLSQAMRKLTGNLKNANCMCIFINQIRMKIGVMFGNPETTTGGNALKFYASVRLDIRRTGAIKDGDEVVGNETRIKVVKNKIAAPFKQAETQILYGQGFNRNGELIDLGVKHKLVEKAGAWYSYKGNKIGQGKANSCKHLVENPAIAEEIEKLLRDMLLSPVGEEVEKADVKKDAKKDAAEALK.

Residue 65–72 (GPESSGKT) participates in ATP binding. Positions 332–352 (EEVEKADVKKDAKKDAAEALK) are disordered. A compositionally biased stretch (basic and acidic residues) spans 333–352 (EVEKADVKKDAKKDAAEALK).

This sequence belongs to the RecA family.

Its subcellular location is the cytoplasm. Functionally, can catalyze the hydrolysis of ATP in the presence of single-stranded DNA, the ATP-dependent uptake of single-stranded DNA by duplex DNA, and the ATP-dependent hybridization of homologous single-stranded DNAs. It interacts with LexA causing its activation and leading to its autocatalytic cleavage. This is Protein RecA from Photobacterium profundum (strain SS9).